The chain runs to 514 residues: ATP synthase subunit alpha (514 aa).

An ATP-binding site is contributed by 170-177 (GDRQIGKT).

Belongs to the ATPase alpha/beta chains family. In terms of assembly, F-type ATPases have 2 components, CF(1) - the catalytic core - and CF(0) - the membrane proton channel. CF(1) has five subunits: alpha(3), beta(3), gamma(1), delta(1), epsilon(1). CF(0) has three main subunits: a(1), b(2) and c(9-12). The alpha and beta chains form an alternating ring which encloses part of the gamma chain. CF(1) is attached to CF(0) by a central stalk formed by the gamma and epsilon chains, while a peripheral stalk is formed by the delta and b chains.

It is found in the cell inner membrane. The catalysed reaction is ATP + H2O + 4 H(+)(in) = ADP + phosphate + 5 H(+)(out). Functionally, produces ATP from ADP in the presence of a proton gradient across the membrane. The alpha chain is a regulatory subunit. This Ectopseudomonas mendocina (strain ymp) (Pseudomonas mendocina) protein is ATP synthase subunit alpha.